Consider the following 270-residue polypeptide: MNTEIPDLEKQQIDHNSGSDDPQPIHDDMAPVSRIRSSGPNHEYIHIADQKFHRDDFYRAFGGTLNPGGAPQPSRKFGNPAPLGLSAFALTTLVFSLCTVQARGVPNPSIAVGLALFYGGVCQFAAGMWEFVQENTFGAAALTSYGGFWMSWAAIEMNAFGIKDSYNDPIEVQNAVGIYLFGWFIFTLMLTLCTLKSTVAFFGLFFMLMMTFLVLACANVTQHHGTAIGGGWLGIITAFFGFYNAYAGLANPGNSYIVPVPLDMPFVKKD.

The segment at 1 to 33 is disordered; the sequence is MNTEIPDLEKQQIDHNSGSDDPQPIHDDMAPVS. A Phosphotyrosine modification is found at Y58. S74 bears the Phosphoserine mark. 6 helical membrane passes run 80 to 100, 109 to 129, 137 to 157, 175 to 195, 198 to 218, and 227 to 247; these read PAPLGLSAFALTTLVFSLCTV, SIAVGLALFYGGVCQFAAGMW, FGAAALTSYGGFWMSWAAIEM, AVGIYLFGWFIFTLMLTLCTL, TVAFFGLFFMLMMTFLVLACA, and AIGGGWLGIITAFFGFYNAYA.

The protein belongs to the acetate uptake transporter (AceTr) (TC 2.A.96) family.

It is found in the membrane. In terms of biological role, plays a role in the adaptation of cell metabolism to the utilization of acetic acid, possibly by inhibiting an anion-transporting ATPase and affecting the plasma membrane H(+)-ATPase. May be indirectly involved in the repression of genes encoding glyoxylate cycle enzymes. The protein is Glyoxylate pathway regulator (GPR1) of Yarrowia lipolytica (strain CLIB 122 / E 150) (Yeast).